A 342-amino-acid chain; its full sequence is Heat-inducible transcription repressor HrcA (342 aa).

Belongs to the HrcA family.

Its function is as follows. Negative regulator of class I heat shock genes (grpE-dnaK-dnaJ and groELS operons). Prevents heat-shock induction of these operons. This chain is Heat-inducible transcription repressor HrcA, found in Acholeplasma laidlawii.